The following is a 517-amino-acid chain: General transcription factor IIF subunit 1 (517 aa).

N-acetylalanine is present on Ala-2. Thr-156 is subject to Phosphothreonine. Positions Gln-178–Ala-458 are disordered. Acidic residues predominate over residues Leu-210–Gly-225. Ser-217, Ser-218, Ser-221, and Ser-224 each carry phosphoserine. The segment covering Pro-232–Lys-251 has biased composition (basic residues). Composition is skewed to acidic residues over residues Asp-255 to Glu-270 and Glu-303 to Glu-325. Thr-331 is subject to Phosphothreonine. The span at Glu-343–Ser-355 shows a compositional bias: acidic residues. The segment covering Ala-364–Arg-374 has biased composition (basic residues). Phosphoserine occurs at positions 377, 380, 381, and 385. A compositionally biased stretch (low complexity) spans Ser-377–Ser-391. Thr-389 carries the post-translational modification Phosphothreonine. Ser-391 is subject to Phosphoserine. Residues Thr-392–Leu-401 show a composition bias toward polar residues. Lys-407 bears the N6-acetyllysine mark. The span at Gly-428–Val-452 shows a compositional bias: polar residues. 3 positions are modified to phosphoserine: Ser-431, Ser-433, and Ser-436. 2 positions are modified to phosphothreonine: Thr-437 and Thr-446. Position 449 is a phosphoserine (Ser-449).

It belongs to the TFIIF alpha subunit family. In terms of assembly, heterodimer of an alpha and a beta subunit. Interacts with GTF2F2, CTDP1, TAF6/TAFII80 and URI1. Interacts with GTF2B (via C-terminus and preferentially via acetylated form); this interaction prevents binding of GTF2B to GTF2F2. Part of TBP-based Pol II pre-initiation complex (PIC), in which Pol II core assembles with general transcription factors and other specific initiation factors including GTF2E1, GTF2E2, GTF2F1, GTF2F2, TCEA1, ERCC2, ERCC3, GTF2H2, GTF2H3, GTF2H4, GTF2H5, GTF2A1, GTF2A2, GTF2B and TBP; this large multi-subunit PIC complex mediates DNA unwinding and targets Pol II core to the transcription start site where the first phosphodiester bond forms. In terms of processing, phosphorylated on Ser and other residues by TAF1 and casein kinase II-like kinases.

Its subcellular location is the nucleus. TFIIF is a general transcription initiation factor that binds to RNA polymerase II and helps to recruit it to the initiation complex in collaboration with TFIIB. It promotes transcription elongation. This is General transcription factor IIF subunit 1 (GTF2F1) from Bos taurus (Bovine).